Here is a 340-residue protein sequence, read N- to C-terminus: GTP 3',8-cyclase (340 aa).

The Radical SAM core domain maps to 8-227 (KLGRPIRDLR…SMIQEEFDIE (220 aa)). Residue R17 coordinates GTP. [4Fe-4S] cluster-binding residues include C24 and C28. Y30 provides a ligand contact to S-adenosyl-L-methionine. C31 is a [4Fe-4S] cluster binding site. Residue R71 coordinates GTP. G75 provides a ligand contact to S-adenosyl-L-methionine. T102 contacts GTP. S126 contacts S-adenosyl-L-methionine. K163 contacts GTP. Residue M197 coordinates S-adenosyl-L-methionine. Positions 261 and 264 each coordinate [4Fe-4S] cluster. 266 to 268 (RAR) contributes to the GTP binding site. C278 contacts [4Fe-4S] cluster.

The protein belongs to the radical SAM superfamily. MoaA family. Monomer and homodimer. [4Fe-4S] cluster serves as cofactor.

The enzyme catalyses GTP + AH2 + S-adenosyl-L-methionine = (8S)-3',8-cyclo-7,8-dihydroguanosine 5'-triphosphate + 5'-deoxyadenosine + L-methionine + A + H(+). Its pathway is cofactor biosynthesis; molybdopterin biosynthesis. Functionally, catalyzes the cyclization of GTP to (8S)-3',8-cyclo-7,8-dihydroguanosine 5'-triphosphate. This is GTP 3',8-cyclase from Staphylococcus carnosus (strain TM300).